The chain runs to 270 residues: Sugar phosphatase YidA (270 aa).

The Nucleophile role is filled by Asp9. Asp9 is a binding site for Mg(2+). Position 10 (Met10) interacts with phosphate. Residue Asp11 participates in Mg(2+) binding. Phosphate contacts are provided by residues 43-44 (TG) and Lys197. Asp220 is a binding site for Mg(2+). Residue Asn223 participates in phosphate binding.

Belongs to the HAD-like hydrolase superfamily. Cof family. Homodimer. Mg(2+) serves as cofactor.

The catalysed reaction is sugar phosphate + H2O = sugar + phosphate.. Functionally, catalyzes the dephosphorylation of different sugar phosphates. This Escherichia coli O6:H1 (strain CFT073 / ATCC 700928 / UPEC) protein is Sugar phosphatase YidA (yidA).